Reading from the N-terminus, the 97-residue chain is MDFSQLGGLLDGMKKEFSQLEEKNKDTIHTSKSGGGMVSVSFNGVGELVDLQIDDSLLEDKEAMQIYLMSALNDGYKAVEENRKNLAFNMLGNFAKL.

This sequence belongs to the YbaB/EbfC family. In terms of assembly, homodimer.

The protein resides in the cytoplasm. The protein localises to the nucleoid. Binds to DNA and alters its conformation. May be involved in regulation of gene expression, nucleoid organization and DNA protection. The sequence is that of Nucleoid-associated protein HPAG1_0033 from Helicobacter pylori (strain HPAG1).